Here is a 319-residue protein sequence, read N- to C-terminus: Ribose-phosphate pyrophosphokinase (319 aa).

ATP is bound by residues Asp40–Glu42 and Arg99–Gln100. Positions 134 and 174 each coordinate Mg(2+). The active site involves Lys198. Residues Arg200, Asp224, and Asp228–Thr232 each bind D-ribose 5-phosphate.

The protein belongs to the ribose-phosphate pyrophosphokinase family. Class I subfamily. Homohexamer. Requires Mg(2+) as cofactor.

The protein resides in the cytoplasm. It carries out the reaction D-ribose 5-phosphate + ATP = 5-phospho-alpha-D-ribose 1-diphosphate + AMP + H(+). The protein operates within metabolic intermediate biosynthesis; 5-phospho-alpha-D-ribose 1-diphosphate biosynthesis; 5-phospho-alpha-D-ribose 1-diphosphate from D-ribose 5-phosphate (route I): step 1/1. In terms of biological role, involved in the biosynthesis of the central metabolite phospho-alpha-D-ribosyl-1-pyrophosphate (PRPP) via the transfer of pyrophosphoryl group from ATP to 1-hydroxyl of ribose-5-phosphate (Rib-5-P). This is Ribose-phosphate pyrophosphokinase from Xanthomonas axonopodis pv. citri (strain 306).